The following is a 405-amino-acid chain: MSESEQYSRNTLMDFIDYRPLDIEICDVTLRDGEQTPGVVFSKEQKLAVASELDSMGIEVIEAGFPVVSADEKEIVKEIANQGFNSRICCLSRAVKGDVDAALECDVDIVSIFIAMSDMHLKYKYHRSLEDMLGCAKEAIEYATDHGLKVRFAAEDASRTPVERLKQAFKEVENEYKVQYVSLADTVGILNPTTTNYLVSEIFKSVNTAICIHCHDDLGMATANTLAAAEAGAKQLHTTVNAIGERAGNASLEEVLVALRVQYGIERYDTTKLNSLSEMVSEYSGITPSVNKAVVGKNAFTHESGIHVAAILEEPRTYELFLPEMVGGKRNLVVGKHTGKKALKGIINSIGFCLEREELCALIEKVKVCTEEKHKSISRDQLERLITQVKQEQKPSGSEKEKFSI.

The Pyruvate carboxyltransferase domain occupies isoleucine 23–asparagine 274.

It belongs to the alpha-IPM synthase/homocitrate synthase family.

The enzyme catalyses acetyl-CoA + 2-oxoglutarate + H2O = (2R)-homocitrate + CoA + H(+). It carries out the reaction 2-oxoadipate + acetyl-CoA + H2O = (R)-dihomocitrate + CoA + H(+). The catalysed reaction is 2-oxoheptanedioate + acetyl-CoA + H2O = (R)-trihomocitrate + CoA + H(+). Its pathway is organic acid metabolism; 2-oxosuberate biosynthesis. Catalyzes the condensation of alpha-ketoglutarate and acetyl-CoA to form (R)-homocitrate. Can also catalyze the condensation of alpha-ketoadipate with acetyl-CoA to form (R)-homo(2)citrate, and the condensation of alpha-ketopimelate with acetyl-CoA to form (R)-homo(3)citrate. These reactions are part of the biosynthesis pathway of coenzyme B and biotin. The chain is Homocitrate synthase AksA (aksA) from Methanosarcina mazei (strain ATCC BAA-159 / DSM 3647 / Goe1 / Go1 / JCM 11833 / OCM 88) (Methanosarcina frisia).